A 394-amino-acid chain; its full sequence is Elongation factor Tu (394 aa).

Positions 10 to 204 constitute a tr-type G domain; the sequence is KPHVNIGTIG…AVDSYIPQPV (195 aa). Positions 19–26 are G1; the sequence is GHVDHGKT. A GTP-binding site is contributed by 19 to 26; that stretch reads GHVDHGKT. Threonine 26 is a Mg(2+) binding site. The interval 60-64 is G2; sequence GITIS. The interval 81 to 84 is G3; it reads DCPG. GTP is bound by residues 81 to 85 and 136 to 139; these read DCPGH and NKVD. The G4 stretch occupies residues 136-139; it reads NKVD. Positions 174–176 are G5; it reads SAL.

This sequence belongs to the TRAFAC class translation factor GTPase superfamily. Classic translation factor GTPase family. EF-Tu/EF-1A subfamily. Monomer.

It is found in the cytoplasm. The enzyme catalyses GTP + H2O = GDP + phosphate + H(+). GTP hydrolase that promotes the GTP-dependent binding of aminoacyl-tRNA to the A-site of ribosomes during protein biosynthesis. In Rickettsia massiliae (strain Mtu5), this protein is Elongation factor Tu.